Here is a 296-residue protein sequence, read N- to C-terminus: 4-hydroxy-tetrahydrodipicolinate synthase (296 aa).

Threonine 49 lines the pyruvate pocket. The active-site Proton donor/acceptor is tyrosine 137. Catalysis depends on lysine 166, which acts as the Schiff-base intermediate with substrate. Isoleucine 208 serves as a coordination point for pyruvate.

Belongs to the DapA family. Homotetramer; dimer of dimers.

Its subcellular location is the cytoplasm. The enzyme catalyses L-aspartate 4-semialdehyde + pyruvate = (2S,4S)-4-hydroxy-2,3,4,5-tetrahydrodipicolinate + H2O + H(+). It functions in the pathway amino-acid biosynthesis; L-lysine biosynthesis via DAP pathway; (S)-tetrahydrodipicolinate from L-aspartate: step 3/4. In terms of biological role, catalyzes the condensation of (S)-aspartate-beta-semialdehyde [(S)-ASA] and pyruvate to 4-hydroxy-tetrahydrodipicolinate (HTPA). In Chlorobaculum parvum (strain DSM 263 / NCIMB 8327) (Chlorobium vibrioforme subsp. thiosulfatophilum), this protein is 4-hydroxy-tetrahydrodipicolinate synthase.